The primary structure comprises 493 residues: Mitochondrial distribution and morphology protein 10 (493 aa).

Belongs to the MDM10 family. In terms of assembly, component of the ER-mitochondria encounter structure (ERMES) or MDM complex, composed of MMM1, MDM10, MDM12 and MDM34. Associates with the mitochondrial outer membrane sorting assembly machinery SAM(core) complex, which consists of SAM35, SAM37 and SAM50, to form a SAM(holo) complex.

The protein localises to the mitochondrion outer membrane. Functionally, component of the ERMES/MDM complex, which serves as a molecular tether to connect the endoplasmic reticulum and mitochondria. Components of this complex are involved in the control of mitochondrial shape and protein biogenesis and may function in phospholipid exchange. MDM10 is involved in the late assembly steps of the general translocase of the mitochondrial outer membrane (TOM complex). Functions in the TOM40-specific route of the assembly of outer membrane beta-barrel proteins, including the association of TOM40 with the receptor TOM22 and small TOM proteins. Can associate with the SAM(core) complex as well as the MDM12-MMM1 complex, both involved in late steps of the major beta-barrel assembly pathway, that is responsible for biogenesis of all outer membrane beta-barrel proteins. May act as a switch that shuttles between both complexes and channels precursor proteins into the TOM40-specific pathway. Plays a role in mitochondrial morphology and in the inheritance of mitochondria. The chain is Mitochondrial distribution and morphology protein 10 from Saccharomyces cerevisiae (strain YJM789) (Baker's yeast).